Here is a 266-residue protein sequence, read N- to C-terminus: Isoprenyl transferase (266 aa).

The active site involves Asp36. Asp36 contacts Mg(2+). Residues 37–40, Trp41, Arg49, His53, and 81–83 contribute to the substrate site; these read GNGR and STE. Asn84 acts as the Proton acceptor in catalysis. Residues Trp85, Arg87, Arg204, and 210–212 each bind substrate; that span reads RIS. A Mg(2+)-binding site is contributed by Glu223.

It belongs to the UPP synthase family. In terms of assembly, homodimer. Mg(2+) serves as cofactor.

Its function is as follows. Catalyzes the condensation of isopentenyl diphosphate (IPP) with allylic pyrophosphates generating different type of terpenoids. This Prochlorococcus marinus (strain SARG / CCMP1375 / SS120) protein is Isoprenyl transferase.